The primary structure comprises 562 residues: NAD-dependent malic enzyme (562 aa).

Tyrosine 101 acts as the Proton donor in catalysis. Arginine 154 provides a ligand contact to NAD(+). The Proton acceptor role is filled by lysine 172. A divalent metal cation-binding residues include glutamate 243, aspartate 244, and aspartate 267. Residues aspartate 267 and asparagine 415 each coordinate NAD(+).

This sequence belongs to the malic enzymes family. Homotetramer. Requires Mg(2+) as cofactor. Mn(2+) is required as a cofactor.

The catalysed reaction is (S)-malate + NAD(+) = pyruvate + CO2 + NADH. It carries out the reaction oxaloacetate + H(+) = pyruvate + CO2. The chain is NAD-dependent malic enzyme from Shewanella sp. (strain ANA-3).